A 375-amino-acid chain; its full sequence is Terpene cyclase braA (375 aa).

The Mg(2+) site is built by D116, N264, and S268. The D(D/E)XX(D/E) motif motif lies at D116–D120. Residues N264–E272 carry the NSE motif motif. Positions W348–Y355 match the WxxxxxRY motif motif. R354 and Y355 together coordinate (2E,6E)-farnesyl diphosphate.

It belongs to the terpene synthase family. As to quaternary structure, homodimer. The cofactor is Mg(2+).

It catalyses the reaction (2E,6E)-farnesyl diphosphate + H2O = trichobrasilenol + diphosphate. It functions in the pathway secondary metabolite biosynthesis. Functionally, terpene cyclase; part of the gene cluster that mediates the biosynthesis of the brasilane terpene glycosides brasilane D and E. The biosynthesis starts with the activity of the terpene cyclase braA that converts farnesyl pyrophosphate into the sesquiterpene alcohol trichobrasilenol. Subsequently, trichobrasilenol is glycosylated by the O-glycosyltransferase braB putatively using UDP-GlcNAc as sugar donor to yield brasilane A. The latter then undergoes two rounds of oxidation performed by the cytochrome P450 monooxygenase braC. In the first round braC hydroxylates C-12 forming brasilane D, which serves as substrate in the second round to establish the epoxide at the bond between C-5 and C-10 and oxidize the alcohol at C-12 to an aldehyde leading to the final product brasilane E. This Annulohypoxylon truncatum (Hypoxylon truncatum) protein is Terpene cyclase braA.